Consider the following 329-residue polypeptide: Minor capsid protein A1 (329 aa).

The segment at 143–162 (GPSPVPGPNPDPPLEPPPGT) is disordered. Over residues 145 to 161 (SPVPGPNPDPPLEPPPG) the composition is skewed to pro residues.

The protein localises to the virion. Functionally, minor capsid protein. The chain is Minor capsid protein A1 from Qbeta virus (strain MX1).